Consider the following 471-residue polypeptide: Tyrosine--tRNA ligase (471 aa).

L-tyrosine is bound at residue Tyr41. The 'HIGH' region motif lies at 46–55 (PTAPSLHVGN). Residues Tyr176 and Gln180 each coordinate L-tyrosine. A 'KMSKS' region motif is present at residues 236 to 240 (KFGKT). Lys239 serves as a coordination point for ATP. Positions 403–471 (DLITHILQKV…GKKHLAAVFY (69 aa)) constitute an S4 RNA-binding domain.

It belongs to the class-I aminoacyl-tRNA synthetase family. TyrS type 1 subfamily. As to quaternary structure, homodimer.

It is found in the cytoplasm. The catalysed reaction is tRNA(Tyr) + L-tyrosine + ATP = L-tyrosyl-tRNA(Tyr) + AMP + diphosphate + H(+). Functionally, catalyzes the attachment of tyrosine to tRNA(Tyr) in a two-step reaction: tyrosine is first activated by ATP to form Tyr-AMP and then transferred to the acceptor end of tRNA(Tyr). The protein is Tyrosine--tRNA ligase of Tropheryma whipplei (strain Twist) (Whipple's bacillus).